A 169-amino-acid chain; its full sequence is Cytochrome c oxidase subunit 4 isoform 1, mitochondrial (169 aa).

A mitochondrion-targeting transit peptide spans 1 to 22 (MLATRVFSLIGRRAISTSVCVR). Residues 23 to 98 (AHGSVVKSED…SFAEMNRSTN (76 aa)) lie on the Mitochondrial matrix side of the membrane. Lysine 29 carries the N6-acetyllysine; alternate modification. Lysine 29 is subject to N6-succinyllysine; alternate. Lysine 53 carries the post-translational modification N6-acetyllysine. Serine 56 and serine 58 each carry phosphoserine. Lysine 60 carries the N6-acetyllysine; alternate modification. The residue at position 60 (lysine 60) is an N6-succinyllysine; alternate. Lysine 67 carries the N6-acetyllysine modification. A helical transmembrane segment spans residues 99–124 (EWKTVVGAAMFFIGFTALLLIWEKHY). Over 125-169 (VYGPIPHTFEEEWVAKQTKRMLDMKVAPIQGFSAKWDYDKNEWKK) the chain is Mitochondrial intermembrane.

This sequence belongs to the cytochrome c oxidase IV family. Component of the cytochrome c oxidase (complex IV, CIV), a multisubunit enzyme composed of 14 subunits. The complex is composed of a catalytic core of 3 subunits MT-CO1, MT-CO2 and MT-CO3, encoded in the mitochondrial DNA, and 11 supernumerary subunits COX4I1 (or COX4I2), COX5A, COX5B, COX6A2 (or COX6A1), COX6B1 (or COX6B2), COX6C, COX7A1 (or COX7A2), COX7B, COX7C, COX8B and NDUFA4, which are encoded in the nuclear genome. The complex exists as a monomer or a dimer and forms supercomplexes (SCs) in the inner mitochondrial membrane with NADH-ubiquinone oxidoreductase (complex I, CI) and ubiquinol-cytochrome c oxidoreductase (cytochrome b-c1 complex, complex III, CIII), resulting in different assemblies (supercomplex SCI(1)III(2)IV(1) and megacomplex MCI(2)III(2)IV(2)). Interacts with PHB2; the interaction decreases in absence of SPHK2. Interacts with AFG1L. Interacts with ABCB7; this interaction allows the regulation of cellular iron homeostasis and cellular reactive oxygen species (ROS) levels in cardiomyocytes. Interacts with FLVCR2; this interaction occurs in the absence of heme and is disrupted upon heme binding. Interacts with IRGC.

Its subcellular location is the mitochondrion inner membrane. It functions in the pathway energy metabolism; oxidative phosphorylation. Its function is as follows. Component of the cytochrome c oxidase, the last enzyme in the mitochondrial electron transport chain which drives oxidative phosphorylation. The respiratory chain contains 3 multisubunit complexes succinate dehydrogenase (complex II, CII), ubiquinol-cytochrome c oxidoreductase (cytochrome b-c1 complex, complex III, CIII) and cytochrome c oxidase (complex IV, CIV), that cooperate to transfer electrons derived from NADH and succinate to molecular oxygen, creating an electrochemical gradient over the inner membrane that drives transmembrane transport and the ATP synthase. Cytochrome c oxidase is the component of the respiratory chain that catalyzes the reduction of oxygen to water. Electrons originating from reduced cytochrome c in the intermembrane space (IMS) are transferred via the dinuclear copper A center (CU(A)) of subunit 2 and heme A of subunit 1 to the active site in subunit 1, a binuclear center (BNC) formed by heme A3 and copper B (CU(B)). The BNC reduces molecular oxygen to 2 water molecules using 4 electrons from cytochrome c in the IMS and 4 protons from the mitochondrial matrix. In Bos taurus (Bovine), this protein is Cytochrome c oxidase subunit 4 isoform 1, mitochondrial (COX4I1).